The sequence spans 571 residues: Potassium-transporting ATPase potassium-binding subunit (571 aa).

The next 11 membrane-spanning stretches (helical) occupy residues 5 to 25, 64 to 84, 136 to 156, 179 to 199, 254 to 274, 285 to 305, 330 to 350, 357 to 376, 421 to 441, 488 to 508, and 527 to 547; these read GWIQIALYGAIVLALVKPLGS, LAYTGAVILFHVLGFAVLYAI, GLTHQNFLSAATGIAVAVALI, LYVLLPICVPYTLFLVWQGIP, LSNLVQMVSIFAIGAALTNVF, WAILGAMGILFLAGVLVTYWA, FGIAASALFAVITTAASCGAV, FTALGGLIPLLNMQLGEIII, MLGILCLPLMMLGFTALATVV, LAIGMLVGRFFVKIPVLAIAG, and GGLFVGLLVGVILIIGGLTFF.

Belongs to the KdpA family. The system is composed of three essential subunits: KdpA, KdpB and KdpC.

The protein localises to the cell inner membrane. Functionally, part of the high-affinity ATP-driven potassium transport (or Kdp) system, which catalyzes the hydrolysis of ATP coupled with the electrogenic transport of potassium into the cytoplasm. This subunit binds the periplasmic potassium ions and delivers the ions to the membrane domain of KdpB through an intramembrane tunnel. This chain is Potassium-transporting ATPase potassium-binding subunit, found in Methylobacterium radiotolerans (strain ATCC 27329 / DSM 1819 / JCM 2831 / NBRC 15690 / NCIMB 10815 / 0-1).